A 356-amino-acid polypeptide reads, in one-letter code: Alanine racemase, catabolic (356 aa).

Lys35 serves as the catalytic Proton acceptor; specific for D-alanine. Residue Lys35 is modified to N6-(pyridoxal phosphate)lysine. Arg130 is a substrate binding site. Tyr253 (proton acceptor; specific for L-alanine) is an active-site residue. Met301 provides a ligand contact to substrate.

This sequence belongs to the alanine racemase family. Pyridoxal 5'-phosphate serves as cofactor.

It carries out the reaction L-alanine = D-alanine. Isomerizes L-alanine to D-alanine which is then oxidized to pyruvate by DadA. The sequence is that of Alanine racemase, catabolic (dadX) from Escherichia coli O157:H7.